The primary structure comprises 193 residues: Xanthine phosphoribosyltransferase (193 aa).

Leu20 and Thr27 together coordinate xanthine. A 5-phospho-alpha-D-ribose 1-diphosphate-binding site is contributed by 128–132 (ANGQA). A xanthine-binding site is contributed by Lys156.

The protein belongs to the purine/pyrimidine phosphoribosyltransferase family. Xpt subfamily. Homodimer.

The protein localises to the cytoplasm. It carries out the reaction XMP + diphosphate = xanthine + 5-phospho-alpha-D-ribose 1-diphosphate. Its pathway is purine metabolism; XMP biosynthesis via salvage pathway; XMP from xanthine: step 1/1. Its function is as follows. Converts the preformed base xanthine, a product of nucleic acid breakdown, to xanthosine 5'-monophosphate (XMP), so it can be reused for RNA or DNA synthesis. The protein is Xanthine phosphoribosyltransferase of Streptococcus pneumoniae (strain CGSP14).